Here is a 785-residue protein sequence, read N- to C-terminus: Cadherin-7 (785 aa).

The signal sequence occupies residues 1 to 27 (MKLGKVEFCHFLQLIALFLCFSGMSQA). The propeptide occupies 28–47 (ELSRSRSKPYFQSGRSRTKR). At 28 to 607 (ELSRSRSKPY…AYVLPAGLST (580 aa)) the chain is on the extracellular side. 5 consecutive Cadherin domains span residues 49–153 (WVWN…EPKF), 154–262 (LDGP…PPRF), 263–377 (PRRS…PPVF), 378–482 (SSPL…APEF), and 482–599 (FAMD…AEAY). N-linked (GlcNAc...) asparagine glycosylation is found at Asn-449 and Asn-530. A helical transmembrane segment spans residues 608–628 (GALIAILACVLTLLVLILLIV). The Cytoplasmic segment spans residues 629–785 (TMRRRKKEPL…YGTGQESLYS (157 aa)).

Its subcellular location is the cell membrane. In terms of biological role, cadherins are calcium-dependent cell adhesion proteins. They preferentially interact with themselves in a homophilic manner in connecting cells; cadherins may thus contribute to the sorting of heterogeneous cell types. The protein is Cadherin-7 (CDH7) of Homo sapiens (Human).